The following is an 82-amino-acid chain: Acyl carrier protein (82 aa).

Residues Glu-4–Leu-79 enclose the Carrier domain. Ser-39 carries the O-(pantetheine 4'-phosphoryl)serine modification.

Belongs to the acyl carrier protein (ACP) family. Post-translationally, 4'-phosphopantetheine is transferred from CoA to a specific serine of apo-ACP by AcpS. This modification is essential for activity because fatty acids are bound in thioester linkage to the sulfhydryl of the prosthetic group.

It localises to the cytoplasm. The protein operates within lipid metabolism; fatty acid biosynthesis. Its function is as follows. Carrier of the growing fatty acid chain in fatty acid biosynthesis. This Coprothermobacter proteolyticus (strain ATCC 35245 / DSM 5265 / OCM 4 / BT) protein is Acyl carrier protein.